The chain runs to 456 residues: Bifunctional protein GlmU (456 aa).

A pyrophosphorylase region spans residues 1-229 (MLNNAMSVVI…LSEVEGVNNR (229 aa)). UDP-N-acetyl-alpha-D-glucosamine contacts are provided by residues 11–14 (LAAG), Lys-25, Gln-76, 81–82 (GT), 103–105 (YGD), Gly-140, Glu-154, Asn-169, and Asn-227. Asp-105 lines the Mg(2+) pocket. Asn-227 serves as a coordination point for Mg(2+). The interval 230 to 250 (LQLSRLERVYQSEQAEKLLLA) is linker. An N-acetyltransferase region spans residues 251–456 (GVMLRDPARF…EGWRRPVKKK (206 aa)). Arg-333 and Lys-351 together coordinate UDP-N-acetyl-alpha-D-glucosamine. Residue His-363 is the Proton acceptor of the active site. UDP-N-acetyl-alpha-D-glucosamine-binding residues include Tyr-366 and Asn-377. Acetyl-CoA-binding positions include Ala-380, 386 to 387 (NY), Ser-405, Ala-423, and Arg-440.

It in the N-terminal section; belongs to the N-acetylglucosamine-1-phosphate uridyltransferase family. The protein in the C-terminal section; belongs to the transferase hexapeptide repeat family. In terms of assembly, homotrimer. The cofactor is Mg(2+).

Its subcellular location is the cytoplasm. The enzyme catalyses alpha-D-glucosamine 1-phosphate + acetyl-CoA = N-acetyl-alpha-D-glucosamine 1-phosphate + CoA + H(+). It catalyses the reaction N-acetyl-alpha-D-glucosamine 1-phosphate + UTP + H(+) = UDP-N-acetyl-alpha-D-glucosamine + diphosphate. Its pathway is nucleotide-sugar biosynthesis; UDP-N-acetyl-alpha-D-glucosamine biosynthesis; N-acetyl-alpha-D-glucosamine 1-phosphate from alpha-D-glucosamine 6-phosphate (route II): step 2/2. It functions in the pathway nucleotide-sugar biosynthesis; UDP-N-acetyl-alpha-D-glucosamine biosynthesis; UDP-N-acetyl-alpha-D-glucosamine from N-acetyl-alpha-D-glucosamine 1-phosphate: step 1/1. The protein operates within bacterial outer membrane biogenesis; LPS lipid A biosynthesis. Catalyzes the last two sequential reactions in the de novo biosynthetic pathway for UDP-N-acetylglucosamine (UDP-GlcNAc). The C-terminal domain catalyzes the transfer of acetyl group from acetyl coenzyme A to glucosamine-1-phosphate (GlcN-1-P) to produce N-acetylglucosamine-1-phosphate (GlcNAc-1-P), which is converted into UDP-GlcNAc by the transfer of uridine 5-monophosphate (from uridine 5-triphosphate), a reaction catalyzed by the N-terminal domain. The chain is Bifunctional protein GlmU from Shigella flexneri serotype 5b (strain 8401).